The following is a 100-amino-acid chain: Carboxysome shell vertex protein CcmL (100 aa).

Residues Met-1–Asp-83 form the BMV domain.

It belongs to the CcmL/EutN family. CcmL subfamily. As to quaternary structure, homopentamer. Interacts with full-length CcmM.

The protein resides in the carboxysome. In terms of biological role, probably forms vertices in the carboxysome, a polyhedral inclusion where RuBisCO (ribulose bisphosphate carboxylase, rbcL-rbcS) is sequestered. Has been modeled to induce curvature upon insertion into an otherwise flat hexagonal molecular layer of CcmK subunits. The sequence is that of Carboxysome shell vertex protein CcmL from Gloeobacter violaceus (strain ATCC 29082 / PCC 7421).